A 306-amino-acid chain; its full sequence is UDP-3-O-acyl-N-acetylglucosamine deacetylase (306 aa).

The Zn(2+) site is built by histidine 79, histidine 238, and aspartate 242. Histidine 265 (proton donor) is an active-site residue.

Belongs to the LpxC family. Requires Zn(2+) as cofactor.

It catalyses the reaction a UDP-3-O-[(3R)-3-hydroxyacyl]-N-acetyl-alpha-D-glucosamine + H2O = a UDP-3-O-[(3R)-3-hydroxyacyl]-alpha-D-glucosamine + acetate. It participates in glycolipid biosynthesis; lipid IV(A) biosynthesis; lipid IV(A) from (3R)-3-hydroxytetradecanoyl-[acyl-carrier-protein] and UDP-N-acetyl-alpha-D-glucosamine: step 2/6. In terms of biological role, catalyzes the hydrolysis of UDP-3-O-myristoyl-N-acetylglucosamine to form UDP-3-O-myristoylglucosamine and acetate, the committed step in lipid A biosynthesis. This Shewanella frigidimarina (strain NCIMB 400) protein is UDP-3-O-acyl-N-acetylglucosamine deacetylase.